The sequence spans 620 residues: MRRSVCYVNPSIARAGQISTWKFLYSLATPLPAGTKCKFDLAGSGKPTDWEAPATDLSQTRNVIYAEMPEGEIIEATAIPVKDNPVPQFEFTLPYELQVGETLTIVMGASPNHPQVDDAGNGAQLFAQRRKPFYLYIDPTGEGNYDEPDVFSMDIRGNVLKKIEIFTPSYVVKNKRFDITVRFEDEFGNLTNFSPEETRIELSYEHLRENLNWQLFIPETGFVILPNLYFNEPGIYRIQLKNLSTQEIFISAPIKCFADSAPNLMWGLLHGESERVDSEENIETCMRYFRDDRALNFYASSSFENQENLSPDIWKLINQTVSDFNEEDRFITLSGFQYSGEPHLEGVRHILHTKETKSHSKHKEYKHIPLAKLYKSTVNHDMISIPSFTASKEHGFDFENFYPEFERVVEIYNAWGSSETTAALNNPFPIQGKDSEDPRGTVIEGLKKNLRFGFVAGGLDDRGIYKDYFDSPQVQYSPGLTAIICNKYTRESLVEALFARHCYATTGPRIVLSFNITSAPMGSELSTGSKPGLNVNRHISGHVAGTALLKTVEIIRNGEVLHTFFPDSNNLDYEYDDMVPLSSVTLKDPNGKAPFVFYYLRVTQADNAMAWSSPIWVDLN.

It belongs to the chlamydial CPn_0512/CT_425/TC_0708 family.

This is an uncharacterized protein from Chlamydia pneumoniae (Chlamydophila pneumoniae).